The sequence spans 382 residues: Lipid-A-disaccharide synthase (382 aa).

Belongs to the LpxB family.

The enzyme catalyses 2-N,3-O-bis[(3R)-3-hydroxytetradecanoyl]-alpha-D-glucosaminyl 1-phosphate + UDP-2-N,3-O-bis[(3R)-3-hydroxytetradecanoyl]-alpha-D-glucosamine = lipid A disaccharide (E. coli) + UDP + H(+). It catalyses the reaction a lipid X + a UDP-2-N,3-O-bis[(3R)-3-hydroxyacyl]-alpha-D-glucosamine = a lipid A disaccharide + UDP + H(+). It participates in glycolipid biosynthesis; lipid IV(A) biosynthesis; lipid IV(A) from (3R)-3-hydroxytetradecanoyl-[acyl-carrier-protein] and UDP-N-acetyl-alpha-D-glucosamine: step 5/6. Functionally, condensation of UDP-2,3-diacylglucosamine and 2,3-diacylglucosamine-1-phosphate to form lipid A disaccharide, a precursor of lipid A, a phosphorylated glycolipid that anchors the lipopolysaccharide to the outer membrane of the cell. This is Lipid-A-disaccharide synthase from Escherichia coli O45:K1 (strain S88 / ExPEC).